The sequence spans 173 residues: Small ribosomal subunit protein uS5 (173 aa).

The S5 DRBM domain maps to 18-81; the sequence is YVEKLVKLNR…EKAKANMVTF (64 aa).

This sequence belongs to the universal ribosomal protein uS5 family. As to quaternary structure, part of the 30S ribosomal subunit. Contacts proteins S4 and S8.

In terms of biological role, with S4 and S12 plays an important role in translational accuracy. Its function is as follows. Located at the back of the 30S subunit body where it stabilizes the conformation of the head with respect to the body. The protein is Small ribosomal subunit protein uS5 of Treponema denticola (strain ATCC 35405 / DSM 14222 / CIP 103919 / JCM 8153 / KCTC 15104).